A 108-amino-acid chain; its full sequence is Small ribosomal subunit protein eS25w (108 aa).

A disordered region spans residues 1–36; the sequence is MAPKKDKVPPPSSKPAKSGGGKQKKKKWSKGKQKEK. The segment covering 22–31 has biased composition (basic residues); that stretch reads KQKKKKWSKG.

It belongs to the eukaryotic ribosomal protein eS25 family.

This chain is Small ribosomal subunit protein eS25w (RPS25E), found in Arabidopsis thaliana (Mouse-ear cress).